We begin with the raw amino-acid sequence, 249 residues long: Triosephosphate isomerase (249 aa).

Asn-9–Lys-11 contributes to the substrate binding site. His-95 acts as the Electrophile in catalysis. Glu-165 functions as the Proton acceptor in the catalytic mechanism. Substrate is bound by residues Gly-171, Ser-210, and Gly-231–Gly-232.

This sequence belongs to the triosephosphate isomerase family. In terms of assembly, homodimer.

It localises to the cytoplasm. It carries out the reaction D-glyceraldehyde 3-phosphate = dihydroxyacetone phosphate. It functions in the pathway carbohydrate biosynthesis; gluconeogenesis. Its pathway is carbohydrate degradation; glycolysis; D-glyceraldehyde 3-phosphate from glycerone phosphate: step 1/1. Functionally, involved in the gluconeogenesis. Catalyzes stereospecifically the conversion of dihydroxyacetone phosphate (DHAP) to D-glyceraldehyde-3-phosphate (G3P). In Hyphomonas neptunium (strain ATCC 15444), this protein is Triosephosphate isomerase.